The sequence spans 284 residues: NH(3)-dependent NAD(+) synthetase (284 aa).

Position 41-48 (41-48) interacts with ATP; the sequence is GLSGGVDS. Asp47 lines the Mg(2+) pocket. Deamido-NAD(+) is bound at residue Arg127. Position 147 (Thr147) interacts with ATP. Mg(2+) is bound at residue Glu152. Asp167 contacts deamido-NAD(+). Residues Lys176 and Ser199 each coordinate ATP. The tract at residues 264–284 is disordered; the sequence is FKRRPAPGLDLPEPEDPAMSG. Acidic residues predominate over residues 275–284; that stretch reads PEPEDPAMSG.

Belongs to the NAD synthetase family. Homodimer.

The catalysed reaction is deamido-NAD(+) + NH4(+) + ATP = AMP + diphosphate + NAD(+) + H(+). The protein operates within cofactor biosynthesis; NAD(+) biosynthesis; NAD(+) from deamido-NAD(+) (ammonia route): step 1/1. Its function is as follows. Catalyzes the ATP-dependent amidation of deamido-NAD to form NAD. Uses ammonia as a nitrogen source. This is NH(3)-dependent NAD(+) synthetase from Methanopyrus kandleri (strain AV19 / DSM 6324 / JCM 9639 / NBRC 100938).